Reading from the N-terminus, the 275-residue chain is NADPH-dependent 7-cyano-7-deazaguanine reductase (275 aa).

Residue 81-83 (IES) participates in substrate binding. 83 to 84 (SK) is an NADPH binding site. Cys181 acts as the Thioimide intermediate in catalysis. The active-site Proton donor is Asp188. 220 to 221 (HE) is a substrate binding site. 249–250 (RG) provides a ligand contact to NADPH.

It belongs to the GTP cyclohydrolase I family. QueF type 2 subfamily. Homodimer.

The protein resides in the cytoplasm. It catalyses the reaction 7-aminomethyl-7-carbaguanine + 2 NADP(+) = 7-cyano-7-deazaguanine + 2 NADPH + 3 H(+). The protein operates within tRNA modification; tRNA-queuosine biosynthesis. Catalyzes the NADPH-dependent reduction of 7-cyano-7-deazaguanine (preQ0) to 7-aminomethyl-7-deazaguanine (preQ1). This Xylella fastidiosa (strain M23) protein is NADPH-dependent 7-cyano-7-deazaguanine reductase.